The primary structure comprises 76 residues: Acyl carrier protein (76 aa).

The region spanning 1–76 is the Carrier domain; the sequence is MSIEERVKKI…SAIDYVQNNQ (76 aa). Serine 36 carries the O-(pantetheine 4'-phosphoryl)serine modification.

It belongs to the acyl carrier protein (ACP) family. 4'-phosphopantetheine is transferred from CoA to a specific serine of apo-ACP by AcpS. This modification is essential for activity because fatty acids are bound in thioester linkage to the sulfhydryl of the prosthetic group.

The protein resides in the cytoplasm. Its pathway is lipid metabolism; fatty acid biosynthesis. Functionally, carrier of the growing fatty acid chain in fatty acid biosynthesis. This chain is Acyl carrier protein, found in Actinobacillus succinogenes (strain ATCC 55618 / DSM 22257 / CCUG 43843 / 130Z).